The following is a 359-amino-acid chain: Nicotinate-nucleotide--dimethylbenzimidazole phosphoribosyltransferase (359 aa).

The active-site Proton acceptor is Glu318.

This sequence belongs to the CobT family. As to quaternary structure, homodimer.

The enzyme catalyses 5,6-dimethylbenzimidazole + nicotinate beta-D-ribonucleotide = alpha-ribazole 5'-phosphate + nicotinate + H(+). It participates in nucleoside biosynthesis; alpha-ribazole biosynthesis; alpha-ribazole from 5,6-dimethylbenzimidazole: step 1/2. In terms of biological role, catalyzes the synthesis of alpha-ribazole-5'-phosphate from nicotinate mononucleotide (NAMN) and 5,6-dimethylbenzimidazole (DMB). The chain is Nicotinate-nucleotide--dimethylbenzimidazole phosphoribosyltransferase from Escherichia coli O127:H6 (strain E2348/69 / EPEC).